The sequence spans 121 residues: Probable K(+)/H(+) antiporter subunit G (121 aa).

Transmembrane regions (helical) follow at residues 10 to 32 (WAAL…GSLG), 45 to 67 (APTI…CFAV), and 72 to 94 (WVFH…LMLL).

The protein belongs to the CPA3 antiporters (TC 2.A.63) subunit G family. In terms of assembly, may form a hetero-oligomeric complex that consists of six subunits: PhaAB, PhaC, PhaD, PhaE, PhaF and PhaG.

The protein localises to the cell membrane. Part of a K(+) efflux system which is required for the adaptation of R.meliloti to alkaline pH as well as for the infection process during symbiotic nodule development. The polypeptide is Probable K(+)/H(+) antiporter subunit G (phaG) (Rhizobium meliloti (strain 1021) (Ensifer meliloti)).